The following is a 757-amino-acid chain: Probable inorganic carbon transporter subunit DabA (757 aa).

Zn(2+) contacts are provided by C321, D323, H475, and C490.

Belongs to the inorganic carbon transporter (TC 9.A.2) DabA family. Forms a complex with DabB. Requires Zn(2+) as cofactor.

The protein resides in the cell inner membrane. Part of an energy-coupled inorganic carbon pump. The protein is Probable inorganic carbon transporter subunit DabA of Idiomarina loihiensis (strain ATCC BAA-735 / DSM 15497 / L2-TR).